The following is a 195-amino-acid chain: L-rhamnose-binding lectin CSL2 (195 aa).

SUEL-type lectin domains are found at residues 1 to 97 and 104 to 195; these read TRVV…YTCL and TCEG…YTCG.

In terms of biological role, L-rhamnose binding lectin. Has hemagglutinating activity towards rabbit erythrocytes and human type B erythrocytes. Hemagglutinating activity is inhibited by smooth-type lipopolysaccharide (LPS) from S.flexneri 1A and E.coli K12, but not by rough-type LPS from S.flexneri, E.coli K12 and E.coli EH100. Agglutinates E.coli K12 and B.subtilis. This Oncorhynchus keta (Chum salmon) protein is L-rhamnose-binding lectin CSL2.